The following is a 181-amino-acid chain: Isopentenyl-diphosphate Delta-isomerase (181 aa).

Histidine 25 and histidine 32 together coordinate Mn(2+). The 135-residue stretch at 30-164 folds into the Nudix hydrolase domain; it reads PLHLAFSCWL…PWAFSPWMVM (135 aa). Cysteine 67 is an active-site residue. Position 69 (histidine 69) interacts with Mn(2+). Mg(2+) is bound at residue glutamate 87. Residues glutamate 114 and glutamate 116 each contribute to the Mn(2+) site. Glutamate 116 is a catalytic residue.

It belongs to the IPP isomerase type 1 family. In terms of assembly, homodimer. It depends on Mg(2+) as a cofactor. Requires Mn(2+) as cofactor.

It is found in the cytoplasm. The enzyme catalyses isopentenyl diphosphate = dimethylallyl diphosphate. It functions in the pathway isoprenoid biosynthesis; dimethylallyl diphosphate biosynthesis; dimethylallyl diphosphate from isopentenyl diphosphate: step 1/1. Its function is as follows. Catalyzes the 1,3-allylic rearrangement of the homoallylic substrate isopentenyl (IPP) to its highly electrophilic allylic isomer, dimethylallyl diphosphate (DMAPP). In Salmonella paratyphi B (strain ATCC BAA-1250 / SPB7), this protein is Isopentenyl-diphosphate Delta-isomerase.